The sequence spans 505 residues: Cytochrome P450 monooxygenase iliC (505 aa).

A helical transmembrane segment spans residues 6-26 (LIAQHSLTLTIASSVLLVFLL). Cys-453 is a heme binding site.

This sequence belongs to the cytochrome P450 family. It depends on heme as a cofactor.

Its subcellular location is the membrane. It catalyses the reaction (3E,5S)-3-[(2E,4E,8S,10E,12Z)-1-hydroxy-4,8-dimethyltetradeca-2,4,10,12-tetraen-1-ylidene]-5-[(4-hydroxyphenyl)methyl]pyrrolidine-2,4-dione + reduced [NADPH--hemoprotein reductase] + O2 = 3-[(2E,4E,8S,10E,12Z)-4,8-dimethyltetradeca-2,4,10,12-tetraenoyl]-4-hydroxy-5-(4-hydroxyphenyl)-1,2-dihydropyridin-2-one + oxidized [NADPH--hemoprotein reductase] + 2 H2O. It participates in mycotoxin biosynthesis. Cytochrome P450 monooxygenase; part of the gene cluster that mediates the biosynthesis of ilicicolin H, a 4-hydroxy-2-pyridonealkaloid that has potent and broad antifungal activities by inhibiting the mitochondrial respiration chain. IliC catalyzes the ring expansion of the tetramate intermediate to the acyclic 2-pyridone intermediate that contains the trans bis-diene chain. The biosynthesis of ilicicolin H starts with formation of the tetramic acid by the hybrid PKS-NRPS synthetase iliA with the partnering trans-enoyl reductase iliB since iliA lacks a designated enoylreductase (ER) domain. The cytochrome P450 monooxygenase iliC then catalyzes the ring expansion of the tetramate to the acyclic 2-pyridone. The pericyclase iliD further converts the acyclic 2-pyridone into 8-epi-ilicicolin H. 8-epi-ilicicolin H might then spontaneously convert to ilicicolin H since ilicicolin H is produced in the absence of the epimerase iliE, in contrast to what was observed for the Talaromyces variabilis ilicolin H biosynthetic pathway. This is Cytochrome P450 monooxygenase iliC from Neonectria sp. (strain DH2).